Reading from the N-terminus, the 208-residue chain is MTYDSEFGSHVSLYRDRIKQVIDDSLNEHLNSMILRVDLHDPIDTENMDNPFFQPRVDSGAISRFTSALKAKLKHDKHIKTQRKDWPDSRHSTLRYAWVREYTKNRKRHYHLILCFNQDAYYHLGDYDLNRNTLRTMITTAWYSALGIPIDSSGKLVNYPPNGKYLLNRKRDNFEQTYSDLMNRVDYMTKVRTKIVGDGDRNFGCSRG.

It to E.coli YagK.

This is an uncharacterized protein from Escherichia coli (strain K12).